The sequence spans 290 residues: Nucleotide-binding protein Bpet0443 (290 aa).

Residue 9–16 coordinates ATP; that stretch reads GISGSGKS. Residue 58-61 coordinates GTP; it reads DVRS.

It belongs to the RapZ-like family.

Functionally, displays ATPase and GTPase activities. This is Nucleotide-binding protein Bpet0443 from Bordetella petrii (strain ATCC BAA-461 / DSM 12804 / CCUG 43448).